The following is a 263-amino-acid chain: Troponin T, slow skeletal muscle (263 aa).

Residues 1 to 38 (MSDAEEQEYEEEQPEEEEAAEEEEEAPEEPEPAAEPEE) show a composition bias toward acidic residues. Disordered stretches follow at residues 1–64 (MSDA…RVDF) and 109–154 (AERA…KKKV). A Phosphoserine; by CK2 modification is found at S2. The segment covering 44–56 (SRPVVPPLIPPKI) has biased composition (pro residues). Residues 109–150 (AERAEQQRFRTEKERERQAKLAEEKMRKEEEEAKKRAEDDAK) show a composition bias toward basic and acidic residues.

The protein belongs to the troponin T family. As to quaternary structure, interacts with TPM3. Expressed dominantly in slow muscles, like masseter, diaphragm, psoas major and spinnalis. Isoform 2 is also expressed in fast muscles.

In terms of biological role, troponin T is the tropomyosin-binding subunit of troponin, the thin filament regulatory complex which confers calcium-sensitivity to striated muscle actomyosin ATPase activity. In Bos taurus (Bovine), this protein is Troponin T, slow skeletal muscle (TNNT1).